We begin with the raw amino-acid sequence, 732 residues long: Polyphosphate kinase (732 aa).

Asn-61 lines the ATP pocket. Positions 417 and 447 each coordinate Mg(2+). Catalysis depends on His-477, which acts as the Phosphohistidine intermediate. Tyr-510, Arg-606, and His-634 together coordinate ATP. Positions 699 to 718 (DGTYRQRQPAPGEAERGTHS) are disordered.

Belongs to the polyphosphate kinase 1 (PPK1) family. The cofactor is Mg(2+). An intermediate of this reaction is the autophosphorylated ppk in which a phosphate is covalently linked to a histidine residue through a N-P bond.

The catalysed reaction is [phosphate](n) + ATP = [phosphate](n+1) + ADP. Its function is as follows. Catalyzes the reversible transfer of the terminal phosphate of ATP to form a long-chain polyphosphate (polyP). This is Polyphosphate kinase from Thermosynechococcus vestitus (strain NIES-2133 / IAM M-273 / BP-1).